Here is a 156-residue protein sequence, read N- to C-terminus: Small ribosomal subunit protein bS6 (156 aa).

Positions Ala95–Glu156 are disordered. The segment covering Arg117–Gly126 has biased composition (basic and acidic residues).

Belongs to the bacterial ribosomal protein bS6 family.

Its function is as follows. Binds together with bS18 to 16S ribosomal RNA. The protein is Small ribosomal subunit protein bS6 of Nitrosococcus oceani (strain ATCC 19707 / BCRC 17464 / JCM 30415 / NCIMB 11848 / C-107).